A 222-amino-acid polypeptide reads, in one-letter code: Hexitol phosphatase B (222 aa).

Catalysis depends on aspartate 13, which acts as the Nucleophile. A divalent metal cation-binding residues include aspartate 13 and aspartate 15. Substrate contacts are provided by residues 13 to 15 (DMD), 115 to 116 (SA), and lysine 148. The Proton donor role is filled by aspartate 15. Aspartate 173 contributes to the a divalent metal cation binding site.

It belongs to the HAD-like hydrolase superfamily. CbbY/CbbZ/Gph/YieH family. Mg(2+) serves as cofactor. Mn(2+) is required as a cofactor. The cofactor is Co(2+). Requires Zn(2+) as cofactor.

The enzyme catalyses sugar phosphate + H2O = sugar + phosphate.. The catalysed reaction is 2-deoxy-D-glucose 6-phosphate + H2O = 2-deoxy-D-glucose + phosphate. It carries out the reaction D-mannitol 1-phosphate + H2O = D-mannitol + phosphate. It catalyses the reaction D-sorbitol 6-phosphate + H2O = D-sorbitol + phosphate. Its function is as follows. Sugar-phosphate phosphohydrolase that catalyzes the dephosphorylation of D-mannitol 1-phosphate and D-sorbitol 6-phosphate. Also catalyzes the dephosphorylation of 2-deoxyglucose 6-phosphate (2dGlu6P); this is a biologically important activity in vivo since it contributes to the elimination of this toxic compound and plays an important role in the resistance of E.coli to 2-deoxyglucose. The polypeptide is Hexitol phosphatase B (Escherichia coli O157:H7).